The sequence spans 158 residues: Transcription elongation factor GreA (158 aa).

Belongs to the GreA/GreB family.

Functionally, necessary for efficient RNA polymerase transcription elongation past template-encoded arresting sites. The arresting sites in DNA have the property of trapping a certain fraction of elongating RNA polymerases that pass through, resulting in locked ternary complexes. Cleavage of the nascent transcript by cleavage factors such as GreA or GreB allows the resumption of elongation from the new 3'terminus. GreA releases sequences of 2 to 3 nucleotides. This chain is Transcription elongation factor GreA, found in Allorhizobium ampelinum (strain ATCC BAA-846 / DSM 112012 / S4) (Agrobacterium vitis (strain S4)).